A 491-amino-acid polypeptide reads, in one-letter code: UDP-N-acetylmuramoyl-L-alanyl-D-glutamate--2,6-diaminopimelate ligase (491 aa).

Ser30 contacts UDP-N-acetyl-alpha-D-muramoyl-L-alanyl-D-glutamate. 108–114 (GTNGKTT) contacts ATP. Residues Asn149, 150–151 (TT), Ser177, Gln183, and Arg185 contribute to the UDP-N-acetyl-alpha-D-muramoyl-L-alanyl-D-glutamate site. Lys217 bears the N6-carboxylysine mark. Residues Arg383, 407-410 (DNPR), Gly458, and Glu462 each bind meso-2,6-diaminopimelate. The Meso-diaminopimelate recognition motif motif lies at 407 to 410 (DNPR).

This sequence belongs to the MurCDEF family. MurE subfamily. Requires Mg(2+) as cofactor. Carboxylation is probably crucial for Mg(2+) binding and, consequently, for the gamma-phosphate positioning of ATP.

The protein resides in the cytoplasm. The enzyme catalyses UDP-N-acetyl-alpha-D-muramoyl-L-alanyl-D-glutamate + meso-2,6-diaminopimelate + ATP = UDP-N-acetyl-alpha-D-muramoyl-L-alanyl-gamma-D-glutamyl-meso-2,6-diaminopimelate + ADP + phosphate + H(+). The protein operates within cell wall biogenesis; peptidoglycan biosynthesis. Functionally, catalyzes the addition of meso-diaminopimelic acid to the nucleotide precursor UDP-N-acetylmuramoyl-L-alanyl-D-glutamate (UMAG) in the biosynthesis of bacterial cell-wall peptidoglycan. This Listeria innocua serovar 6a (strain ATCC BAA-680 / CLIP 11262) protein is UDP-N-acetylmuramoyl-L-alanyl-D-glutamate--2,6-diaminopimelate ligase.